The primary structure comprises 476 residues: NAD(+) hydrolase ThsA (476 aa).

A Deacetylase sirtuin-type domain is found at 4–283 (NPIVELFIKD…QRIENNIKTK (280 aa)). NAD(+)-binding residues include Ala-23, Asp-114, and His-152. His-152 acts as the Proton acceptor in catalysis. The SLOG (STALD) domain, binds 3'cADPR stretch occupies residues 284–476 (TVFLSGSAVE…IIEFVEILSN (193 aa)). 3'cADPR is bound by residues Gly-289, Ser-290, Leu-326, Phe-357, Arg-371, Lys-388, Gly-399, and Glu-403.

Belongs to the soluble Thoeris ThsA family. Homotetramer formed by dimer of dimers; homooctamers are occasionally seen. Not seen to interact with ThsB. In the absence of the signal generated by ThsB, 63% monomer and 20% homotetramer; in the presence of the ThsB signal product 40% of the protein is dimeric. Homotetramer in solution; probably dimerizes via the N-terminal sirtuin-like domain.

It is found in the cytoplasm. It catalyses the reaction NAD(+) + H2O = ADP-D-ribose + nicotinamide + H(+). With respect to regulation, activated by a molecule generated by endogenous ThsB (AC J8G8J6) or ThsB' (AC J8CSK2); activation in vitro is 50-100x more sensitive to 3' cyclic ADP-D-ribose (3'cADPR) than 2'cADPR. 3'cADPR activates the NADase function of ThsA by binding to the SLOG domain, which changes its tetramer organization, allowing NAD to access the active site. Also activated by a signal molecule generated by B.dafuensis TIR1 (AC A0A5B8Z670) and TIR2 (AC A0A5B8Z260), and by BdTIR (AC I1GTC2), a plant protein involved in defense against bacterial infection. The signal produced by BdTIR is probably 2'cADPR, which activates this protein, the signal produced by endogenous ThsB' is probably 3'cADPR. In terms of biological role, NAD(+) hydrolyzing component (NADase) of the Thoeris antiviral defense system, composed of ThsA and ThsB. Activated by a signal molecule generated by endogenous ThsB (AC J8G8J6) or ThsB' (AC J8CSK2, probably 3'cADPR), by TIR1 and TIR2 from B.dafuensis or by BdTIR from B.distachyon (AC I1GTC2, probably 2'cADPR). Upon activation binds and hydrolyzes NAD(+), leading to cell death and inhibition of phage replication. Not seen to bind DNA. Activation is 50-100x more sensitive to 3' cyclic ADP-D-ribose (3'cADPR) than 2'cADPR. In another paper ThsA is not activated by any tested cADPR isomer, although it binds 3'cADPR; it was suggested the protein is already in a fully active state. Expression of ThsA and ThsB in B.subtilis (strain BEST7003) confers resistance to phages phi29, SBSphiC, SBSphiJ and SPO1. At multiplicity of infection (MOI) of 0.05 Thoeris-encoding cultures grow normally when infected with SPO1, at MOI 5 cultures collapse prematurely by 90 minutes post-infection, thus the phage are not able to complete a replication cycle. NAD(+) levels fall and ADP-D-ribose levels rise 60 minutes post-infection. Thoeris cultures eventually recover, but retain the same susceptibility to SPO1. The sequence is that of NAD(+) hydrolase ThsA from Bacillus cereus (strain MSX-D12).